Reading from the N-terminus, the 173-residue chain is Crossover junction endodeoxyribonuclease RuvC (173 aa).

Active-site residues include Asp-8, Glu-67, and Asp-139. 3 residues coordinate Mg(2+): Asp-8, Glu-67, and Asp-139.

This sequence belongs to the RuvC family. As to quaternary structure, homodimer which binds Holliday junction (HJ) DNA. The HJ becomes 2-fold symmetrical on binding to RuvC with unstacked arms; it has a different conformation from HJ DNA in complex with RuvA. In the full resolvosome a probable DNA-RuvA(4)-RuvB(12)-RuvC(2) complex forms which resolves the HJ. Mg(2+) is required as a cofactor.

The protein localises to the cytoplasm. The catalysed reaction is Endonucleolytic cleavage at a junction such as a reciprocal single-stranded crossover between two homologous DNA duplexes (Holliday junction).. Its function is as follows. The RuvA-RuvB-RuvC complex processes Holliday junction (HJ) DNA during genetic recombination and DNA repair. Endonuclease that resolves HJ intermediates. Cleaves cruciform DNA by making single-stranded nicks across the HJ at symmetrical positions within the homologous arms, yielding a 5'-phosphate and a 3'-hydroxyl group; requires a central core of homology in the junction. The consensus cleavage sequence is 5'-(A/T)TT(C/G)-3'. Cleavage occurs on the 3'-side of the TT dinucleotide at the point of strand exchange. HJ branch migration catalyzed by RuvA-RuvB allows RuvC to scan DNA until it finds its consensus sequence, where it cleaves and resolves the cruciform DNA. This is Crossover junction endodeoxyribonuclease RuvC from Shewanella sp. (strain ANA-3).